Here is a 101-residue protein sequence, read N- to C-terminus: Small ribosomal subunit protein uS14 (101 aa).

The protein belongs to the universal ribosomal protein uS14 family. As to quaternary structure, part of the 30S ribosomal subunit. Contacts proteins S3 and S10.

Binds 16S rRNA, required for the assembly of 30S particles and may also be responsible for determining the conformation of the 16S rRNA at the A site. The polypeptide is Small ribosomal subunit protein uS14 (Alteromonas mediterranea (strain DSM 17117 / CIP 110805 / LMG 28347 / Deep ecotype)).